The chain runs to 152 residues: Avidin (152 aa).

Positions Met1–Ser24 are cleaved as a signal peptide. The Avidin-like domain maps to Arg26–Thr149. A disulfide bridge connects residues Cys28 and Cys107. Asn41 is a glycosylation site (N-linked (GlcNAc...) asparagine). Tyr57 provides a ligand contact to biotin.

The protein belongs to the avidin/streptavidin family. In terms of assembly, homotetramer. Post-translationally, N-linked glycan at Asn-41 consists of GlcNAc(beta1-2)Man(alpha1-3)[GlcNAc(beta1-4)][Man(alpha1-?)Man(alpha1-6)] Man(beta1-4)GlcNAc(beta1-4)GlcNAc. Synthesized in hen oviduct and concentrated in egg white (where it represents 0.05% of the total protein).

Its subcellular location is the secreted. In terms of biological role, the biological function of avidin is not known. Forms a strong non-covalent specific complex with biotin (one molecule of biotin per subunit of avidin). The sequence is that of Avidin (AVD) from Gallus gallus (Chicken).